A 30-amino-acid polypeptide reads, in one-letter code: Bacteriocin plantaricin KL-1Y (30 aa).

It is found in the secreted. Bacteriocin with activity against species of Lactobacillus, Lactococcus, Pediococcus, Leuconostoc and against B.subtilis and, to a lesser extent, against B.coagulans, B.cereus and species of Enterococcus, Listeria, Kocuria, Staphylococcus, Corynebacterium, Salmonella, Pseudomonas and Escherichia. The polypeptide is Bacteriocin plantaricin KL-1Y (Lactiplantibacillus plantarum (Lactobacillus plantarum)).